We begin with the raw amino-acid sequence, 405 residues long: Envelope glycoprotein M (405 aa).

Residues 1-17 (MKSSKNDTFVYRTWFKT) are Intravirion-facing. The helical transmembrane segment at 18–38 (LVVYFVMFVMSAVVPITAMFP) threads the bilayer. The Virion surface segment spans residues 39-76 (NLGYPCYFNALVDYGALNLTNYNLAHHLTPTLYLEPPE). Residues 77–97 (MFVYITLVFIADCVAFIYYAC) traverse the membrane as a helical segment. Over 98-121 (GEVALIKARKKVSGLTDLSAWVSA) the chain is Intravirion. The chain crosses the membrane as a helical span at residues 122–142 (VGSPTVLFLAILKLWSIQVFI). Topologically, residues 143-149 (QVLSYKH) are virion surface. Residues 150–170 (VFLSAFVYFLHFLASVLHACA) traverse the membrane as a helical segment. Residues 171–192 (CVTRFSPVWVVKAQDNSIPQDT) lie on the Intravirion side of the membrane. The helical transmembrane segment at 193–215 (FLWWVVFYLKPIVTNLYLGCLAL) threads the bilayer. The Virion surface portion of the chain corresponds to 216 to 245 (ETLVFSLSVFLALGNSFYFMVGDMVLGAVN). Residues 246–266 (LFLVLPIFWYILTEVWLASFL) traverse the membrane as a helical segment. Position 267 (Arg267) is a topological domain, intravirion. Residues 268 to 288 (HNFGFYCGMFIASIILILPLV) traverse the membrane as a helical segment. Over 289 to 299 (RYEAVFVSAKL) the chain is Virion surface. The helical transmembrane segment at 300–320 (HTTVAINVAIIPILCSVAMLI) threads the bilayer. The Intravirion portion of the chain corresponds to 321–405 (RICRIFKSMR…TTDSEEEIFP (85 aa)). The segment at 346-405 (LESEPRPRPSRTPSPGRNRRRSSTSSSSSRSTRRQRPVSTQALISSVLPMTTDSEEEIFP) is disordered. The span at 386–397 (QALISSVLPMTT) shows a compositional bias: polar residues.

This sequence belongs to the herpesviridae glycoprotein M family. Interacts (via N-terminus) with gN (via N-terminus). The gM-gN heterodimer forms the gCII complex.

The protein resides in the virion membrane. Its subcellular location is the host Golgi apparatus. It is found in the host trans-Golgi network. It localises to the host endosome membrane. The protein localises to the host nucleus inner membrane. Functionally, envelope glycoprotein important for virion assembly and egress. Plays a role in the correct incorporation of gH-gL into virion membrane. Directs the glycoprotein N (gN) to the host trans-Golgi network. In Homo sapiens (Human), this protein is Envelope glycoprotein M.